Consider the following 105-residue polypeptide: Cysteine-rich venom protein VAR2 (105 aa).

The signal sequence occupies residues 1–22; it reads MILLKLYLTLAAILCQSRGTTS.

The protein belongs to the CRISP family. Post-translationally, contains 8 disulfide bonds. In terms of tissue distribution, expressed by the venom gland.

The protein localises to the secreted. Its function is as follows. Blocks ryanodine receptors, and potassium channels. In Varanus acanthurus (Ridge-tailed monitor), this protein is Cysteine-rich venom protein VAR2.